A 1148-amino-acid chain; its full sequence is Envelopment polyprotein (1148 aa).

An N-terminal signal peptide occupies residues 1 to 23 (MGELSPVCLCLLLQGLLLCNTGA). Residues 24 to 496 (ARNLNELKME…PGLHGWATML (473 aa)) are Lumenal-facing. Disulfide bonds link cysteine 34–cysteine 159, cysteine 68–cysteine 165, cysteine 117–cysteine 136, cysteine 141–cysteine 146, cysteine 183–cysteine 193, and cysteine 218–cysteine 257. Asparagine 142 carries N-linked (GlcNAc...) asparagine; by host glycosylation. Residue asparagine 357 is glycosylated (N-linked (GlcNAc...) asparagine; by host). 4 cysteine pairs are disulfide-bonded: cysteine 386/cysteine 445, cysteine 390/cysteine 399, cysteine 415/cysteine 434, and cysteine 462/cysteine 485. Asparagine 409 is a glycosylation site (N-linked (GlcNAc...) asparagine; by host). The chain crosses the membrane as a helical span at residues 497–517 (LLLTFCFGWVLIPTITMILLK). The Cytoplasmic segment spans residues 518-637 (ILIAFAYLCS…LSLFRYRSRF (120 aa)). Residues 526–543 (CSKYNTDSKFRILIEKVK) form a binding to the ribonucleoprotein region. 2 consecutive CCHC-type zinc fingers follow at residues 555 to 575 (CEVCQYECETAKELESHRKSC) and 580 to 601 (CPYCLNPSEATTSALQAHFKVC). Binding to the ribonucleoprotein regions lie at residues 598–615 (FKVCKLTSRFQENLRKSL), 602–613 (KLTSRFQENLRK), and 621–635 (MQGCYRTLSLFRYRS). The ITAM domain maps to 621-644 (MQGCYRTLSLFRYRSRFFVGLVWC). Residues 625-628 (YRTL) carry the YxxL motif. A helical transmembrane segment spans residues 638-658 (FVGLVWCVLLVLELIVWAASA). Residues 659 to 1115 (ETQNLNAGWT…WILGVLNGNW (457 aa)) are Lumenal-facing. 8 disulfide bridges follow: cysteine 745–cysteine 780, cysteine 749–cysteine 787, cysteine 761–cysteine 894, cysteine 775–cysteine 905, cysteine 790–cysteine 913, cysteine 816–cysteine 825, cysteine 833–cysteine 842, and cysteine 873–cysteine 877. Residues 767–787 (YEYETGWGCNPPDCPGVGTGC) form a fusion loop region. Asparagine 937 is a glycosylation site (N-linked (GlcNAc...) asparagine; by host). Disulfide bonds link cysteine 979/cysteine 1009, cysteine 1002/cysteine 1054, cysteine 1019/cysteine 1024, cysteine 1055/cysteine 1060, and cysteine 1094/cysteine 1098. The chain crosses the membrane as a helical span at residues 1116–1136 (MVVAVLVVLLILSILLFTLCC). 2 binding to the ribonucleoprotein regions span residues 1131-1143 (LFTLCCPRRPSYR) and 1131-1148 (LFTLCCPRRPSYRKEHKP). The Cytoplasmic portion of the chain corresponds to 1137 to 1148 (PRRPSYRKEHKP).

Belongs to the hantavirus envelope glycoprotein family. Homodimer. Homotetramer; forms heterotetrameric Gn-Gc spikes in the pre-fusion conformation. Interacts (via C-terminus) with the nucleoprotein. Interacts with host TUFM; this interaction contributes to the virus-induced degradation of mitochondria by autophagy, which leads to degradation of host MAVS and inhibition of type I interferon (IFN) responses. Interacts with host MAP1LC3B; this interaction contributes to the virus-induced degradation of mitochondria by autophagy, which leads to degradation of host MAVS and inhibition of type I interferon (IFN) responses. In terms of assembly, homodimer. Homotetramer; forms heterotetrameric Gn-Gc spikes in the pre-fusion conformation. Homotrimer; forms homotrimer in the post-fusion conformation at acidic pH. Interacts (via C-terminus) with the nucleoprotein. In terms of processing, envelope polyprotein precursor is quickly cleaved in vivo just after synthesis, presumably by host signal peptidase.

Its subcellular location is the virion membrane. The protein localises to the host cell surface. It is found in the host Golgi apparatus membrane. It localises to the host endoplasmic reticulum membrane. The protein resides in the host mitochondrion. Forms homotetramers with glycoprotein C at the surface of the virion. Attaches the virion to host cell receptors including integrin ITGAV/ITGB3. This attachment induces virion internalization predominantly through clathrin-dependent endocytosis. Mediates the assembly and budding of infectious virus particles through its interaction with the nucleocapsid protein and the viral genome. May dysregulate normal immune and endothelial cell responses through an ITAM motif. Translocates to mitochondria, binds to host TUFM and recruits MAP1LC3B. These interactions induce mitochondrial autophagy and therefore destruction of host MAVS leading to inhibition of type I interferon (IFN) responses. Concomitant breakdown of glycoprotein N is apparently prevented by the nucleoprotein that may inhibit Gn-stimulated autophagosome-lysosome fusion. Interacts with the viral genomic RNA. Its function is as follows. Forms homotetramers with glycoprotein N at the surface of the virion. Attaches the virion to host cell receptors including integrin ITGAV/ITGB3. This attachment induces virion internalization predominantly through clathrin-dependent endocytosis. Class II fusion protein that promotes fusion of viral membrane with host endosomal membrane after endocytosis of the virion. This chain is Envelopment polyprotein (GP), found in Homo sapiens (Human).